A 132-amino-acid chain; its full sequence is Small ribosomal subunit protein uS8 (132 aa).

This sequence belongs to the universal ribosomal protein uS8 family. Part of the 30S ribosomal subunit. Contacts proteins S5 and S12.

Functionally, one of the primary rRNA binding proteins, it binds directly to 16S rRNA central domain where it helps coordinate assembly of the platform of the 30S subunit. In Streptococcus sanguinis (strain SK36), this protein is Small ribosomal subunit protein uS8.